Consider the following 148-residue polypeptide: MTETPFWQRKTLDEMSDAEWESLCDGCGQCCLHKLMDEDTDEIYFTNVACRQLNIKTCQCRNYERRFEYEPDCIKLTRENLPTFEWLPPTCAYRLLAEGKNLPLWHPLRTGSKAAMHAERISVRHIAVKESEVRDWQDHILNKPDWAE.

It belongs to the UPF0260 family.

The polypeptide is UPF0260 protein ESA_01462 (Cronobacter sakazakii (strain ATCC BAA-894) (Enterobacter sakazakii)).